Reading from the N-terminus, the 288-residue chain is Lysosomal thioesterase PPT2-B (288 aa).

The N-terminal stretch at 1–20 (MRGYLLLLPLLLCLVDNSVS) is a signal peptide. Cysteine 95 and cysteine 103 are disulfide-bonded. Serine 97 (nucleophile) is an active-site residue. An N-linked (GlcNAc...) asparagine glycan is attached at asparagine 143. A disulfide bond links cysteine 151 and cysteine 162. Asparagine 192 carries N-linked (GlcNAc...) asparagine glycosylation. Residues aspartate 214 and histidine 269 contribute to the active site. N-linked (GlcNAc...) asparagine glycosylation is present at asparagine 275.

Belongs to the palmitoyl-protein thioesterase family.

The protein localises to the lysosome. It catalyses the reaction hexadecanoyl-CoA + H2O = hexadecanoate + CoA + H(+). It carries out the reaction S-hexadecanoyl-N-acetylcysteamine + H2O = N-acetylcysteamine + hexadecanoate + H(+). Its function is as follows. Catalyzes the cleavage of thioester bonds from S-palmitoyl-CoA or S-palmitoyl-N-acetylcysteamine (unbranched structures) but does not have activity against palmitoylcysteine or palmitoylated proteins, branched structures or bulky head groups. Conversely, hydrolyzes both long and short chain fatty acyl-CoA substrate. The protein is Lysosomal thioesterase PPT2-B (ppt2-b) of Xenopus laevis (African clawed frog).